We begin with the raw amino-acid sequence, 636 residues long: 1-deoxy-D-xylulose-5-phosphate synthase (636 aa).

Residues H72 and 113-115 (GHA) each bind thiamine diphosphate. D144 contacts Mg(2+). Thiamine diphosphate is bound by residues 145 to 146 (GA), N174, Y287, and E370. Residue N174 coordinates Mg(2+).

The protein belongs to the transketolase family. DXPS subfamily. In terms of assembly, homodimer. It depends on Mg(2+) as a cofactor. Thiamine diphosphate serves as cofactor.

It carries out the reaction D-glyceraldehyde 3-phosphate + pyruvate + H(+) = 1-deoxy-D-xylulose 5-phosphate + CO2. The protein operates within metabolic intermediate biosynthesis; 1-deoxy-D-xylulose 5-phosphate biosynthesis; 1-deoxy-D-xylulose 5-phosphate from D-glyceraldehyde 3-phosphate and pyruvate: step 1/1. Its function is as follows. Catalyzes the acyloin condensation reaction between C atoms 2 and 3 of pyruvate and glyceraldehyde 3-phosphate to yield 1-deoxy-D-xylulose-5-phosphate (DXP). This is 1-deoxy-D-xylulose-5-phosphate synthase from Crocosphaera subtropica (strain ATCC 51142 / BH68) (Cyanothece sp. (strain ATCC 51142)).